Reading from the N-terminus, the 491-residue chain is MSTPSIAPAPAPLVPALAAKPAISPSPGPGTPGSITSKEWVIPPRPKPGRKPATDTPPTKRKAQNRAAQRAFRERRAARVNELEEQIKKIEDEHEIHIAAFKEQITNLSREVEQCRSEMTWWRDRCHALEKEVSVERSAKEAIVKEFRSSLSDREAVRSDKGLAPLTTSTPQARSSDRPDNGDASNNDSGEGREEVPLGCNDCSTSHCQCIEDAFTMPGVVAQEQSRRLDTTKPGLSEPQIKPDPEEMEIDFTSRFAATQQQDQSPTSVSSPAVDPCGFCSDGTPCICAEMAAQEEQRPRRNSFENNRLAPIQNLSQFTPPPSDGDVRSDVTLPPISQATNPCANGPGTCAQCLADPRRTLFCKTLAASRSPSAAPSGCCGGKGADGGCCQSRNTNVSRGRSGSNNNTSSGSSAAPSLTLSCADAYTTLSRHPNFSRATDELSTWLPKLHTLPKPRDFPLTDRGVPRAALEVEAASVMGVLRYFDRRFADK.

The tract at residues 19-73 (AKPAISPSPGPGTPGSITSKEWVIPPRPKPGRKPATDTPPTKRKAQNRAAQRAFR) is disordered. The bZIP domain maps to 55–95 (DTPPTKRKAQNRAAQRAFRERRAARVNELEEQIKKIEDEHE). The interval 60 to 79 (KRKAQNRAAQRAFRERRAAR) is basic motif. The tract at residues 83–90 (LEEQIKKI) is leucine-zipper. Over residues 149 to 161 (SSLSDREAVRSDK) the composition is skewed to basic and acidic residues. Disordered regions lie at residues 149–196 (SSLS…REEV), 224–245 (EQSR…KPDP), and 397–416 (VSRG…SAAP). The span at 397-413 (VSRGRSGSNNNTSSGSS) shows a compositional bias: low complexity.

The protein belongs to the bZIP family. YAP subfamily.

It is found in the nucleus. In terms of biological role, transcription factor required for repression of genes during iron starvation. Represses iron-dependent and mitochondrial-localized activities including respiration, TCA cycle, amino acid metabolism, iron-sulfur-cluster and heme biosynthesis. Iron starvation causes a massive remodeling of the amino acid pool and hapX is essential for the coordination of the production of siderophores and their precursor ornithine. The chain is bZIP transcription factor hapX from Aspergillus fumigatus (strain ATCC MYA-4609 / CBS 101355 / FGSC A1100 / Af293) (Neosartorya fumigata).